A 274-amino-acid polypeptide reads, in one-letter code: MQFSKMHGLGNDFMVVDAVTQNVYFSPELIRRLADRHTGVGFDQMLVVEPPYDPELDFHYRIFNADGSEVSQCGNGARCFARFVRLKGLTNKRDISVSTQTGRMILSVTEDELVCVNMGEPNFEPQSVPFRAAKAEKTYILRAAEHTVLCGVVSMGNPHCVMQVDDVSVANVALLGPVLESHERFPERANIGFMQVVSREHIRLRVYERGAGETQACGSGACAAVAVGIQQELLGEEVHVELPGGSLHISWKGPGHPLYMTGPATHVYDGFIHL.

Positions 11, 44, and 64 each coordinate substrate. Cys73 acts as the Proton donor in catalysis. Substrate is bound by residues 74-75 (GN), Asn157, Asn190, and 208-209 (ER). The active-site Proton acceptor is the Cys217. 218–219 (GS) is a binding site for substrate.

Belongs to the diaminopimelate epimerase family. As to quaternary structure, homodimer.

Its subcellular location is the cytoplasm. It carries out the reaction (2S,6S)-2,6-diaminopimelate = meso-2,6-diaminopimelate. It functions in the pathway amino-acid biosynthesis; L-lysine biosynthesis via DAP pathway; DL-2,6-diaminopimelate from LL-2,6-diaminopimelate: step 1/1. Functionally, catalyzes the stereoinversion of LL-2,6-diaminopimelate (L,L-DAP) to meso-diaminopimelate (meso-DAP), a precursor of L-lysine and an essential component of the bacterial peptidoglycan. The sequence is that of Diaminopimelate epimerase from Yersinia enterocolitica serotype O:8 / biotype 1B (strain NCTC 13174 / 8081).